A 110-amino-acid polypeptide reads, in one-letter code: Glycine-rich selenoprotein (110 aa).

Topologically, residues 1–20 are lumenal; the sequence is MVYIDHNGRVWEKRPWDWRR. The helical; Signal-anchor for type III membrane protein transmembrane segment at 21–41 threads the bilayer; that stretch reads IVELFVGIWFAIKQLFLTFLA. The Cytoplasmic segment spans residues 42 to 110; sequence PFTGNNNQAN…CNMPAGGGUG (69 aa). A disordered region spans residues 51–110; sequence NPRRGNGWGGGGGWGGGGGGGGGGGGGRPGSGSGGLRPNRRIGRIQPTMSCNMPAGGGUG. The segment covering 56-85 has biased composition (gly residues); sequence NGWGGGGGWGGGGGGGGGGGGGRPGSGSGG. Sec-109 is a non-standard amino acid (selenocysteine).

The protein resides in the golgi apparatus membrane. Its function is as follows. Plays a role in the life span. May be involved in regulating the redox state of the cell and possesses anticarcinogenic properties. In Drosophila melanogaster (Fruit fly), this protein is Glycine-rich selenoprotein (SelG).